A 581-amino-acid polypeptide reads, in one-letter code: Metal transporter Nramp7.1 (581 aa).

N-linked (GlcNAc...) asparagine glycosylation is found at asparagine 11 and asparagine 19. Helical transmembrane passes span 57-77 (FLSY…PGNL), 90-110 (ELLW…SLAA), 146-166 (YCLW…EGII), 181-201 (LLIG…WVGV), 224-244 (LLIA…MSYV), 270-290 (IALL…ALVL), and 307-327 (YFLI…LAVI). Residue asparagine 338 is glycosylated (N-linked (GlcNAc...) asparagine). A run of 5 helical transmembrane segments spans residues 370–390 (IYAI…TYAG), 409–429 (LVTR…GGSS), 434–454 (LIII…FALI), 473–493 (IYII…NIYY), and 513–533 (VFIG…VIYL). The segment at 551–581 (PQQQANMENGLGPEMERVPYREDLADIPLPE) is disordered. Over residues 564-574 (EMERVPYREDL) the composition is skewed to basic and acidic residues.

The protein belongs to the NRAMP (TC 2.A.55) family.

The protein resides in the membrane. Probable divalent metal transporter. This Populus trichocarpa (Western balsam poplar) protein is Metal transporter Nramp7.1.